A 2346-amino-acid chain; its full sequence is N-benzoylphenylalaninol synthetase apmA (2346 aa).

The segment at 263 to 652 (ESAAQKSPDA…GRKDLQVKIR (390 aa)) is adenylation 1. The 77-residue stretch at 784 to 860 (MPTTTTEMTL…DMAKAMTSTR (77 aa)) folds into the Carrier 1 domain. S821 is modified (O-(pantetheine 4'-phosphoryl)serine). Positions 896 to 1306 (QDAYPCSPLQ…ISPQDKENLL (411 aa)) are condensation. The tract at residues 1330–1713 (SQPNAPAICA…GRKDTQVKIR (384 aa)) is adenylation 2. The 83-residue stretch at 1842–1924 (SALRASEDKA…GLAAFIDAEL (83 aa)) folds into the Carrier 2 domain. S1883 is modified (O-(pantetheine 4'-phosphoryl)serine). The interval 1960–2311 (VTGGTGFLGT…RNVQFLVEAG (352 aa)) is reductase (R) domain.

The protein belongs to the NRP synthetase family.

The enzyme catalyses benzoate + L-phenylalanine + 2 AH2 + 2 ATP = N-benzoyl-L-phenylalaninol + 2 A + 2 AMP + 2 diphosphate + H(+). It functions in the pathway secondary metabolite biosynthesis. Nonribosomal peptide synthase; part of the gene cluster that mediates the biosynthesis of asperphenamate, a rare linear amino acid ester that exhibits antitumor activity towards a number of cell lines. The structure of asperphenamate contains two subunits, N-benzoylphenylalanine and N-benzoylphenylalaninol, which are connected by an inter-molecular ester bond. The first step of asperphenamate biosynthesis is the generation of N-benzoylphenylalaninol by the nonribosomal peptide synthase apmA. Using phenylalanine and benzoic acid as substrates, apmA catalyzes amide bond formation and tethers the intermediate into the NRPS chain. Then, the terminal R domain of apmA catalyzes the reduction reaction to get the shunt product N-benzoylphenylalaninol. Subsequently, the nonribosomal peptide synthase apmB activates the same substrates as does apmA (phenylalanine and benzoic acid) to produce N-benzoylphenylalanine before condensing N-benzoylphenylalanine and N-benzoylphenylalaninol to release asperphenamate. This chain is N-benzoylphenylalaninol synthetase apmA, found in Penicillium brevicompactum.